A 136-amino-acid polypeptide reads, in one-letter code: Small ribosomal subunit protein eS8 (136 aa).

Belongs to the eukaryotic ribosomal protein eS8 family. Part of the 30S ribosomal subunit.

The polypeptide is Small ribosomal subunit protein eS8 (rps8e) (Aeropyrum pernix (strain ATCC 700893 / DSM 11879 / JCM 9820 / NBRC 100138 / K1)).